An 82-amino-acid chain; its full sequence is Small ribosomal subunit protein bS16 (82 aa).

It belongs to the bacterial ribosomal protein bS16 family.

The chain is Small ribosomal subunit protein bS16 from Deinococcus deserti (strain DSM 17065 / CIP 109153 / LMG 22923 / VCD115).